A 2234-amino-acid polypeptide reads, in one-letter code: RNA-directed RNA polymerase L (2234 aa).

The endonuclease stretch occupies residues Ile26–Cys283. Residues Glu51, Asp89, and Glu102 each contribute to the Mn(2+) site. Residue Lys115 is part of the active site. The segment covering Lys879 to Lys891 has biased composition (basic and acidic residues). Disordered stretches follow at residues Lys879–Leu898 and Lys927–Arg949. Residues Arg935 to Asn945 are compositionally biased toward polar residues. Residues Met1184 to Val1383 form the RdRp catalytic domain. A Mg(2+)-binding site is contributed by Asp1342.

It belongs to the Bunyavirales RNA polymerase family. As to quaternary structure, homomultimer; the oligomeric structure is essential for the polymerase activity. Interacts with nucleoprotein N. Interacts with protein Z; this interaction inhibits viral transcription and replication, Z partially blocks the product exit tunnel for the releasing nascent RNA product. Requires Mn(2+) as cofactor. The cofactor is Mg(2+).

It localises to the virion. It is found in the host cytoplasm. The enzyme catalyses RNA(n) + a ribonucleoside 5'-triphosphate = RNA(n+1) + diphosphate. Functionally, RNA-dependent RNA polymerase, which is responsible for the replication and transcription of the viral RNA genome using antigenomic RNA as an intermediate. During transcription, synthesizes subgenomic RNAs and assures their capping by a cap-snatching mechanism, which involves the endonuclease activity cleaving the host capped pre-mRNAs. These short capped RNAs are then used as primers for viral transcription. The 3'-end of subgenomic mRNAs molecules are heterogeneous and not polyadenylated. The replicase function is to direct synthesis of antigenomic and genomic RNA which are encapsidated and non capped. As a consequence of the use of the same enzyme for both transcription and replication, these mechanisms need to be well coordinated. These processes may be regulated by proteins N and Z in a dose-dependent manner. Z protein inhibits the viral polymerase L und thus the viral transcription and RNA synthesis. The polypeptide is RNA-directed RNA polymerase L (Bolomys (OLVV)).